Reading from the N-terminus, the 354-residue chain is Thiamine thiazole synthase (354 aa).

Substrate is bound by residues A83, E104 to A105, G112, and V177. 2,3-didehydroalanine (Cys) is present on C210. Substrate contacts are provided by residues D212, H227, M305, and R315 to G317.

Belongs to the THI4 family. As to quaternary structure, homooctamer. Fe cation is required as a cofactor. In terms of processing, during the catalytic reaction, a sulfide is transferred from Cys-210 to a reaction intermediate, generating a dehydroalanine residue.

It is found in the cytoplasm. Its subcellular location is the nucleus. The catalysed reaction is [ADP-thiazole synthase]-L-cysteine + glycine + NAD(+) = [ADP-thiazole synthase]-dehydroalanine + ADP-5-ethyl-4-methylthiazole-2-carboxylate + nicotinamide + 3 H2O + 2 H(+). Its function is as follows. Involved in biosynthesis of the thiamine precursor thiazole. Catalyzes the conversion of NAD and glycine to adenosine diphosphate 5-(2-hydroxyethyl)-4-methylthiazole-2-carboxylic acid (ADT), an adenylated thiazole intermediate. The reaction includes an iron-dependent sulfide transfer from a conserved cysteine residue of the protein to a thiazole intermediate. The enzyme can only undergo a single turnover, which suggests it is a suicide enzyme. May have additional roles in adaptation to various stress conditions and in DNA damage tolerance. This chain is Thiamine thiazole synthase, found in Candida albicans (strain SC5314 / ATCC MYA-2876) (Yeast).